Consider the following 149-residue polypeptide: Ricin B-like lectin (149 aa).

S2 is modified (N-acetylserine). 4 residues coordinate a carbohydrate: D21, G24, N39, and N47. The involved in dimerization stretch occupies residues 110-112 (PNL).

In terms of assembly, homodimer. Post-translationally, the N-terminus is blocked.

Lectin specific for terminal, non-reducing N-acetylgalactosamine (Gal-NAc)-containing carbohydrates including N,N'-diacetyllactosediamine/LDN (GalNAcbeta1-4GlcNAc, LacdiNAc). Specific also for carbohydrates containing N-acetylglucosamine (-GlcNAc) or N-acetyllactosamine (-Galbeta1-4GlcNAc) at the reducing end. Agglutinates human blood group A, AB, B and O erythrocytes with a strong preference for group A. Agglutinates bovine erythrocytes with a very low specificity. Binds carbohydrates bivalently, which is required for its biological activity. Exhibits insecticidal activity against the fruit fly D.melanogaster, mosquito A.aegypti, and amoebozoa A.castellanii. Has anti-nutritional activity against Colorado potato beetle L.decemlineata, and against worm C.elegans. Has antiproliferative activity against human leukemic T-cells. Has an immunostimulatory effect on human antigen-presenting dendritic cells, which are subsequently able to induce efficient T-cell immune responses. This chain is Ricin B-like lectin, found in Clitocybe nebularis (Clouded agaric).